Here is a 173-residue protein sequence, read N- to C-terminus: MAVQGQRFMTKTQHYRKVTKPLLERKRRARMNLYLDELKDLIVDTMDAQGEQVSKLEKADILELTVNYLKAQQQQRVANPQSPPPDQVNLDKFRAGYTQAAYEVSHIFSTVPGLDLKFGTHLMKQLGHQLKDMKQEEEIIDMAEEPVNLADQKRSKSPREEDIHHGEEVWRPW.

The 58-residue stretch at 15-72 (YRKVTKPLLERKRRARMNLYLDELKDLIVDTMDAQGEQVSKLEKADILELTVNYLKAQ) folds into the bHLH domain. Residues 93 to 126 (FRAGYTQAAYEVSHIFSTVPGLDLKFGTHLMKQL) enclose the Orange domain. The segment at 147-173 (VNLADQKRSKSPREEDIHHGEEVWRPW) is disordered. The segment covering 151 to 173 (DQKRSKSPREEDIHHGEEVWRPW) has biased composition (basic and acidic residues). A WRPW motif motif is present at residues 170–173 (WRPW).

Transcription repression requires formation of a complex with a corepressor protein (Groucho).

The protein localises to the nucleus. Transcriptional repressor of genes that require a bHLH protein for their transcription. May serve as a transcriptional regulator of the Achaete-scute complex (AS-C) genes. Contributes to the neural-epidermal lineage decision during early neurogenesis. As part of the Notch signaling pathway, required to maintain the self-renewal and identity of type II neuroblasts by regulating the expression of the transcriptional repressor erm. The protein is Enhancer of split mdelta protein of Drosophila melanogaster (Fruit fly).